A 254-amino-acid polypeptide reads, in one-letter code: Alcohol dehydrogenase (254 aa).

Residue 10 to 33 coordinates NAD(+); that stretch reads FVAGLGGIGLDTSRELVKRDLKNL. S138 provides a ligand contact to substrate. The active-site Proton acceptor is Y151.

The protein belongs to the short-chain dehydrogenases/reductases (SDR) family. As to quaternary structure, homodimer.

It carries out the reaction a primary alcohol + NAD(+) = an aldehyde + NADH + H(+). It catalyses the reaction a secondary alcohol + NAD(+) = a ketone + NADH + H(+). The sequence is that of Alcohol dehydrogenase (Adh) from Drosophila subobscura (Fruit fly).